The sequence spans 469 residues: MKPVIALIGRPNVGKSTLFNQITKSRDALVADFAGLTRDRKYGDATYQNKSFIVVDTGGIGESEGGIDNYMAEQSKTAINEADIIIFVVDARAGLLASDEQIARELRTLGKKIYLVANKVDGVHAEAALVEFYKLGMGEPLQVAASHGRGVQQMLEDVLQDIPEDENPEEHDKDTGLRLAIIGRPNVGKSTLVNRLLGEDRVVAFDQPGTTRDSIYIPFEREGRKYTLIDTAGVRRKGKVDEMIEKFSIVKTLQAMKDAHVVVVVVDAREGIVEQDLHLIGYALEAGRAMVIAINKWDNMSEYDRKQCKLDVERRFDFIPWARIHLISALHGTGVGELYPSIHRAYESANLKVSPAKLTQILNDATDQHQPPTVQGRRIKMRYAHMGGQNPPTIVIHGNKVDKTPADYRRYLENVFRKVYKLEGTPVKIEFKTSENPFEGRKSQVDERTAARRRRYIQKFKKAEKKFKR.

EngA-type G domains lie at 3-166 (PVIA…PEDE) and 177-350 (LRLA…ESAN). GTP-binding positions include 9 to 16 (GRPNVGKS), 56 to 60 (DTGGI), 118 to 121 (NKVD), 183 to 190 (GRPNVGKS), 230 to 234 (DTAGV), and 295 to 298 (NKWD). One can recognise a KH-like domain in the interval 351-435 (LKVSPAKLTQ…PVKIEFKTSE (85 aa)).

This sequence belongs to the TRAFAC class TrmE-Era-EngA-EngB-Septin-like GTPase superfamily. EngA (Der) GTPase family. Associates with the 50S ribosomal subunit.

Functionally, GTPase that plays an essential role in the late steps of ribosome biogenesis. The protein is GTPase Der of Acinetobacter baumannii (strain ACICU).